The primary structure comprises 111 residues: Universal stress protein B (111 aa).

The next 2 membrane-spanning stretches (helical) occupy residues 1 to 21 and 90 to 110; these read MIST…NMAR and FILT…LMIW.

Belongs to the universal stress protein B family.

It localises to the cell inner membrane. The chain is Universal stress protein B from Cronobacter sakazakii (strain ATCC BAA-894) (Enterobacter sakazakii).